Here is a 585-residue protein sequence, read N- to C-terminus: GRR1-like protein 1 (585 aa).

Residues 1–48 (MGLRFPPKVLEHILSFIDSNEDRNSVSLVCKSWFETERKTRKRVFVGN) form the F-box domain. Lysine 70 is a 1D-myo-inositol hexakisphosphate binding site. Residues 77–78 (DY) form an interaction with auxin-responsive proteins region. Residues 109–110 (KR) and arginine 340 contribute to the 1D-myo-inositol hexakisphosphate site. The tract at residues 343–348 (PSEPDL) is interaction with auxin-responsive proteins. 1D-myo-inositol hexakisphosphate is bound at residue 397–399 (CFR). Residues 401–405 (CVIEP) are interaction with auxin-responsive proteins. 1D-myo-inositol hexakisphosphate is bound at residue arginine 432. The interaction with auxin-responsive proteins stretch occupies residues 460 to 461 (AF). Residues 480–481 (KK) and arginine 505 each bind 1D-myo-inositol hexakisphosphate.

Part of a SCF (SKP1-cullin-F-box) protein ligase complex. Interacts with CUL1, SKP1A/ASK1 and SKP1B/ASK2. Interacts with Aux/IAA proteins (IAA7 and IAA12) in an auxin-dependent manner. As to expression, ubiquitous.

Its subcellular location is the nucleus. The protein operates within protein modification; protein ubiquitination. Its function is as follows. Component of SCF(ASK-cullin-F-box) E3 ubiquitin ligase complexes, which may mediate the ubiquitination and subsequent proteasomal degradation of target proteins. Auxin receptor that mediates Aux/IAA proteins proteasomal degradation and auxin-regulated transcription. Involved in embryogenesis regulation by auxin. Confers sensitivity to the virulent bacterial pathogen P.syringae. Mediates glucose repression in yeast. This Arabidopsis thaliana (Mouse-ear cress) protein is GRR1-like protein 1 (GRH1).